Here is a 197-residue protein sequence, read N- to C-terminus: dITP/XTP pyrophosphatase (197 aa).

Position 10–15 (10–15) interacts with substrate; the sequence is SHNGGK. The Mg(2+) site is built by Glu41 and Asp70. Asp70 (proton acceptor) is an active-site residue. Substrate is bound by residues Ser71, 154-157, Lys177, and 182-183; these read FGYD and HR.

It belongs to the HAM1 NTPase family. As to quaternary structure, homodimer. It depends on Mg(2+) as a cofactor.

The enzyme catalyses XTP + H2O = XMP + diphosphate + H(+). It catalyses the reaction dITP + H2O = dIMP + diphosphate + H(+). It carries out the reaction ITP + H2O = IMP + diphosphate + H(+). Its function is as follows. Pyrophosphatase that catalyzes the hydrolysis of nucleoside triphosphates to their monophosphate derivatives, with a high preference for the non-canonical purine nucleotides XTP (xanthosine triphosphate), dITP (deoxyinosine triphosphate) and ITP. Seems to function as a house-cleaning enzyme that removes non-canonical purine nucleotides from the nucleotide pool, thus preventing their incorporation into DNA/RNA and avoiding chromosomal lesions. This chain is dITP/XTP pyrophosphatase, found in Pseudomonas syringae pv. tomato (strain ATCC BAA-871 / DC3000).